Consider the following 122-residue polypeptide: uncharacterized protein (122 aa).

This is an uncharacterized protein from Escherichia coli O157:H7.